The following is a 188-amino-acid chain: Segregation and condensation protein B (188 aa).

It belongs to the ScpB family. Homodimer. Homodimerization may be required to stabilize the binding of ScpA to the Smc head domains. Component of a cohesin-like complex composed of ScpA, ScpB and the Smc homodimer, in which ScpA and ScpB bind to the head domain of Smc. The presence of the three proteins is required for the association of the complex with DNA.

The protein resides in the cytoplasm. Its function is as follows. Participates in chromosomal partition during cell division. May act via the formation of a condensin-like complex containing Smc and ScpA that pull DNA away from mid-cell into both cell halves. This is Segregation and condensation protein B from Lactococcus lactis subsp. lactis (strain IL1403) (Streptococcus lactis).